The following is a 787-amino-acid chain: uncharacterized protein (787 aa).

Positions M1–A22 are cleaved as a signal peptide. Residue C23 is the site of N-palmitoyl cysteine attachment. C23 carries S-diacylglycerol cysteine lipidation. Disordered regions lie at residues S178 to I270 and K473 to S495. A compositionally biased stretch (polar residues) spans V181–P208. A compositionally biased stretch (basic and acidic residues) spans A209–A219. Low complexity predominate over residues S242–D261.

The protein belongs to the MG185/MG260 family.

It localises to the cell membrane. This is an uncharacterized protein from Mycoplasma pneumoniae (strain ATCC 29342 / M129 / Subtype 1) (Mycoplasmoides pneumoniae).